The following is a 518-amino-acid chain: WEB family protein At2g40480 (518 aa).

2 coiled-coil regions span residues 95 to 141 (DIKR…LQQE) and 188 to 219 (DNLV…AKLT). Positions 303–337 (NGESQDDDSEFCFPEPPRSPVTPRGLRIDNDFSTD) are disordered. Residues 328–337 (LRIDNDFSTD) are compositionally biased toward basic and acidic residues. Positions 344 to 375 (ILKKLEEATEGVKQSKQALEAALNRVEIANVK) form a coiled coil.

It belongs to the WEB family.

This Arabidopsis thaliana (Mouse-ear cress) protein is WEB family protein At2g40480.